A 400-amino-acid chain; its full sequence is Probable S-adenosylmethionine synthase (400 aa).

135-140 (KPGSKD) is an ATP binding site.

The protein belongs to the AdoMet synthase 2 family. Mg(2+) serves as cofactor.

It catalyses the reaction L-methionine + ATP + H2O = S-adenosyl-L-methionine + phosphate + diphosphate. The protein operates within amino-acid biosynthesis; S-adenosyl-L-methionine biosynthesis; S-adenosyl-L-methionine from L-methionine: step 1/1. In terms of biological role, catalyzes the formation of S-adenosylmethionine from methionine and ATP. The polypeptide is Probable S-adenosylmethionine synthase (mat) (Aquifex aeolicus (strain VF5)).